The following is a 55-amino-acid chain: Large ribosomal subunit protein bL33 (55 aa).

The protein belongs to the bacterial ribosomal protein bL33 family.

The chain is Large ribosomal subunit protein bL33 from Azorhizobium caulinodans (strain ATCC 43989 / DSM 5975 / JCM 20966 / LMG 6465 / NBRC 14845 / NCIMB 13405 / ORS 571).